The following is a 104-amino-acid chain: L-rhamnose mutarotase (104 aa).

Tyrosine 18 lines the substrate pocket. Histidine 22 (proton donor) is an active-site residue. Residues tyrosine 41 and 76-77 (WW) each bind substrate.

This sequence belongs to the rhamnose mutarotase family. As to quaternary structure, homodimer.

The protein localises to the cytoplasm. It catalyses the reaction alpha-L-rhamnose = beta-L-rhamnose. The protein operates within carbohydrate metabolism; L-rhamnose metabolism. Its function is as follows. Involved in the anomeric conversion of L-rhamnose. The sequence is that of L-rhamnose mutarotase from Mannheimia succiniciproducens (strain KCTC 0769BP / MBEL55E).